Reading from the N-terminus, the 207-residue chain is LexA repressor (207 aa).

The segment at residues V28 to S48 is a DNA-binding region (H-T-H motif). Catalysis depends on for autocatalytic cleavage activity residues S130 and K168.

This sequence belongs to the peptidase S24 family. As to quaternary structure, homodimer.

It carries out the reaction Hydrolysis of Ala-|-Gly bond in repressor LexA.. In terms of biological role, represses a number of genes involved in the response to DNA damage (SOS response), including recA and lexA. In the presence of single-stranded DNA, RecA interacts with LexA causing an autocatalytic cleavage which disrupts the DNA-binding part of LexA, leading to derepression of the SOS regulon and eventually DNA repair. This chain is LexA repressor, found in Staphylococcus aureus (strain Mu3 / ATCC 700698).